The chain runs to 250 residues: Cobalt transport protein CbiM (250 aa).

The N-terminal stretch at M1–A24 is a signal peptide. 6 consecutive transmembrane segments (helical) span residues L32–I52, M67–V87, L99–F119, L122–M142, V161–Q181, and I203–F223.

Belongs to the CbiM family. As to quaternary structure, forms an energy-coupling factor (ECF) transporter complex composed of an ATP-binding protein (A component, CbiO), a transmembrane protein (T component, CbiQ) and 2 possible substrate-capture proteins (S components, CbiM and CbiN) of unknown stoichimetry.

The protein localises to the cell membrane. It participates in cofactor biosynthesis; adenosylcobalamin biosynthesis. Part of the energy-coupling factor (ECF) transporter complex CbiMNOQ involved in cobalt import. The protein is Cobalt transport protein CbiM of Desulforamulus reducens (strain ATCC BAA-1160 / DSM 100696 / MI-1) (Desulfotomaculum reducens).